Consider the following 377-residue polypeptide: RNA polymerase sigma factor SigA (377 aa).

Positions E72–F92 are disordered. The segment at L144–T214 is sigma-70 factor domain-2. The Interaction with polymerase core subunit RpoC motif lies at D168–Q171. Positions E223 to A299 are sigma-70 factor domain-3. Residues V312 to H365 are sigma-70 factor domain-4. The H-T-H motif DNA-binding region spans L338–A357.

This sequence belongs to the sigma-70 factor family. RpoD/SigA subfamily. Interacts transiently with the RNA polymerase catalytic core.

The protein localises to the cytoplasm. Its function is as follows. Sigma factors are initiation factors that promote the attachment of RNA polymerase to specific initiation sites and are then released. This sigma factor is the primary sigma factor during exponential growth. In Bacillus sp, this protein is RNA polymerase sigma factor SigA.